An 80-amino-acid chain; its full sequence is Small ribosomal subunit protein bS18 (80 aa).

Belongs to the bacterial ribosomal protein bS18 family. In terms of assembly, part of the 30S ribosomal subunit. Forms a tight heterodimer with protein bS6.

Functionally, binds as a heterodimer with protein bS6 to the central domain of the 16S rRNA, where it helps stabilize the platform of the 30S subunit. This is Small ribosomal subunit protein bS18 from Staphylococcus aureus (strain Mu3 / ATCC 700698).